The following is a 258-amino-acid chain: Imidazole glycerol phosphate synthase subunit HisF (258 aa).

Residues D11 and D130 contribute to the active site.

It belongs to the HisA/HisF family. As to quaternary structure, heterodimer of HisH and HisF.

It is found in the cytoplasm. It catalyses the reaction 5-[(5-phospho-1-deoxy-D-ribulos-1-ylimino)methylamino]-1-(5-phospho-beta-D-ribosyl)imidazole-4-carboxamide + L-glutamine = D-erythro-1-(imidazol-4-yl)glycerol 3-phosphate + 5-amino-1-(5-phospho-beta-D-ribosyl)imidazole-4-carboxamide + L-glutamate + H(+). It participates in amino-acid biosynthesis; L-histidine biosynthesis; L-histidine from 5-phospho-alpha-D-ribose 1-diphosphate: step 5/9. In terms of biological role, IGPS catalyzes the conversion of PRFAR and glutamine to IGP, AICAR and glutamate. The HisF subunit catalyzes the cyclization activity that produces IGP and AICAR from PRFAR using the ammonia provided by the HisH subunit. In Escherichia coli O127:H6 (strain E2348/69 / EPEC), this protein is Imidazole glycerol phosphate synthase subunit HisF.